Here is a 143-residue protein sequence, read N- to C-terminus: Transcriptional regulator MraZ (143 aa).

2 consecutive SpoVT-AbrB domains span residues 5–47 and 76–119; these read TYTP…PKEE and ADEQ…DAQA.

Belongs to the MraZ family. Forms oligomers.

It localises to the cytoplasm. It is found in the nucleoid. This is Transcriptional regulator MraZ from Corynebacterium efficiens (strain DSM 44549 / YS-314 / AJ 12310 / JCM 11189 / NBRC 100395).